A 282-amino-acid chain; its full sequence is Ermin (282 aa).

2 stretches are compositionally biased toward polar residues: residues 1–12 (MTDTPVTLSGSE) and 21–30 (NGQQPSSQTR). Residues 1 to 71 (MTDTPVTLSG…NSKGNVLPRG (71 aa)) form a disordered region. Phosphoserine occurs at positions 72, 212, 224, 228, and 231. Residues 212–224 (SPLKEESLAREDS) are compositionally biased toward basic and acidic residues. A disordered region spans residues 212–246 (SPLKEESLAREDSPLSSPSSQPGTPDEQLVLGKKG). The segment covering 225-234 (PLSSPSSQPG) has biased composition (polar residues). Threonine 235 is subject to Phosphothreonine. The binds actin stretch occupies residues 263–282 (KIRKGNTKQRIDEFESMMHL).

As to quaternary structure, binds actin. As to expression, expressed specifically by the oligodendrocytes. Highest expression seen in the spinal cord followed by brainstem, cerebellum, thalamus, and hypothalamus. In the myelin sheath, found mainly in the abaxon and the lateral few terminal loops. Its apposition to the myelinated axon, through the latter, defines an axonal subregion, termed juxtanode, at the Ranvier node-paranode junction.

The protein localises to the cytoplasm. The protein resides in the cytoskeleton. Functionally, plays a role in cytoskeletal rearrangements during the late wrapping and/or compaction phases of myelinogenesis as well as in maintenance and stability of myelin sheath in the adult. May play an important role in late-stage oligodendroglia maturation, myelin/Ranvier node formation during CNS development, and in the maintenance and plasticity of related structures in the mature CNS. The chain is Ermin (Ermn) from Rattus norvegicus (Rat).